The sequence spans 1529 residues: Mediator of RNA polymerase II transcription subunit 1.1 (1529 aa).

Disordered stretches follow at residues 685 to 740 (PDAA…VVGE), 807 to 919 (QYRM…MRDN), and 933 to 1529 (PDIE…IDDE). A compositionally biased stretch (basic residues) spans 693–702 (GKQRKPRAKK). Low complexity-rich tracts occupy residues 722-739 (GAAA…GVVG) and 807-828 (QYRM…PQQQ). The segment covering 894–905 (TPSPLSAPPKPF) has biased composition (pro residues). Positions 908-919 (EQHHFGTKMRDN) are enriched in basic and acidic residues. Low complexity-rich tracts occupy residues 958–990 (SSSS…TAQT) and 1008–1023 (QEQA…IQQQ). Positions 1008-1032 (QEQALQKQEQQRIQQQDSVDSTNSE) form a coiled coil. Polar residues-rich tracts occupy residues 1051-1061 (NQVNRVMNMSN), 1068-1089 (GSST…STGS), and 1096-1105 (TPGTSSNIAQ). Composition is skewed to basic and acidic residues over residues 1113-1130 (LKKE…EKLI), 1137-1185 (LKVD…ERDK), 1192-1240 (RDRT…KELS), and 1262-1278 (PKKD…KDES). Residues 1169–1202 (EKEDKSQREKDKKERDKERKRRDRDRTEAKKEKD) are a coiled coil. Over residues 1279 to 1288 (IPGPSTSSES) the composition is skewed to low complexity. Over residues 1289-1304 (STRKEVAPAPISRKES) the composition is skewed to basic and acidic residues. Residues 1349–1365 (SYSGSSNAGPISSSSRG) show a composition bias toward low complexity. Composition is skewed to pro residues over residues 1375–1386 (PVLPPPALPMRG) and 1477–1500 (QPPP…APPS).

Belongs to the Mediator complex subunit 1 family. Component of the Mediator complex.

Its subcellular location is the nucleus. Component of the Mediator complex, a coactivator involved in the regulated transcription of nearly all RNA polymerase II-dependent genes. Mediator functions as a bridge to convey information from gene-specific regulatory proteins to the basal RNA polymerase II transcription machinery. Mediator is recruited to promoters by direct interactions with regulatory proteins and serves as a scaffold for the assembly of a functional preinitiation complex with RNA polymerase II and the general transcription factors. In Caenorhabditis briggsae, this protein is Mediator of RNA polymerase II transcription subunit 1.1 (sop-3).